We begin with the raw amino-acid sequence, 344 residues long: tRNA dimethylallyltransferase (344 aa).

19-26 (GPTASGKT) serves as a coordination point for ATP. 21–26 (TASGKT) lines the substrate pocket.

The protein belongs to the IPP transferase family. In terms of assembly, monomer. It depends on Mg(2+) as a cofactor.

The enzyme catalyses adenosine(37) in tRNA + dimethylallyl diphosphate = N(6)-dimethylallyladenosine(37) in tRNA + diphosphate. In terms of biological role, catalyzes the transfer of a dimethylallyl group onto the adenine at position 37 in tRNAs that read codons beginning with uridine, leading to the formation of N6-(dimethylallyl)adenosine (i(6)A). The polypeptide is tRNA dimethylallyltransferase (Bifidobacterium animalis subsp. lactis (strain AD011)).